The sequence spans 156 residues: Large ribosomal subunit protein eL24 (156 aa).

Basic and acidic residues predominate over residues 110–123 (RAAKEKQKQKELEK). A disordered region spans residues 110–156 (RAAKEKQKQKELEKKAKKVEKKKPTLAPKQKAAKITQKPAPRVGGKR).

It belongs to the eukaryotic ribosomal protein eL24 family.

In Schistosoma japonicum (Blood fluke), this protein is Large ribosomal subunit protein eL24 (RPL24).